A 63-amino-acid polypeptide reads, in one-letter code: Eumenitin VP1 (63 aa).

The N-terminal stretch at 1–22 (MRGTSFILFAVVVILGFLHANA) is a signal peptide. 5 AXPX repeats span residues 22 to 25 (AEPL), 26 to 29 (ANPA), 32 to 35 (ANPD), 40 to 43 (ADPL), and 44 to 47 (ADPE). Positions 23–48 (EPLANPAPLANPDPLANADPLADPEA) are excised as a propeptide.

In terms of tissue distribution, expressed by the venom gland.

It localises to the secreted. The protein resides in the target cell membrane. Antimicrobial peptide with activities against the fungi B.cinerea (MIC=5 uM) and C.albicans (MIC=100 uM), the Gram-negative bacterium E.coli (MIC=25 uM) and the Gram-positive bacterium S.aureus (MIC=100 uM). Shows cytolytic activity against insect cell lines. Has no hemolytic activity against human erythrocytes. In vivo, peptide injection in the vicinity of the head and thorax of lepidopteran larvae induces feeding disorder followed by death due to starvation. This chain is Eumenitin VP1, found in Eumenes pomiformis (Potter wasp).